The sequence spans 65 residues: Large ribosomal subunit protein bL31 (65 aa).

Positions 16, 18, 36, and 39 each coordinate Zn(2+).

This sequence belongs to the bacterial ribosomal protein bL31 family. Type A subfamily. In terms of assembly, part of the 50S ribosomal subunit. The cofactor is Zn(2+).

In terms of biological role, binds the 23S rRNA. This is Large ribosomal subunit protein bL31 from Geotalea daltonii (strain DSM 22248 / JCM 15807 / FRC-32) (Geobacter daltonii).